We begin with the raw amino-acid sequence, 117 residues long: Eukaryotic translation initiation factor 4E-binding protein (117 aa).

2 positions are modified to phosphothreonine: threonine 37 and threonine 46. The YXXXXLphi motif; atypical motif lies at 54 to 60; that stretch reads YERAFMK. Serine 65 carries the post-translational modification Phosphoserine. Position 70 is a phosphothreonine (threonine 70).

Belongs to the eIF4E-binding protein family. Hypophosphorylated Thor/4E-BP competes with eIF4G1 to interact with eIF4E1; insulin stimulated Akt1 or Tor phosphorylation of Thor/4E-BP causes dissociation of the complex allowing eIF4G1 to bind and consequent initiation of translation. Post-translationally, phosphorylation at Thr-37, Thr-46, Ser-65 and Thr-70, corresponding to the hyperphosphorylated form, impairs its ability to prevent the interaction between eIF4G1 and eIF4E1, without affecting its interaction with free eIF4E1. Phosphorylated in rtesponse to insulin. Phosphorylation at Thr-46 is regulated by Tor and constitutes the major phosphorylation event that regulates activity. As to expression, widely expressed.

Repressor of translation initiation that regulates eIF4E1 activity by preventing its assembly into the eIF4F complex. Hypophosphorylated form competes with eIF4G1 and strongly binds to eIF4E1, leading to repress translation. In contrast, hyperphosphorylated form dissociates from eIF4E1, allowing interaction between eIF4G1 and eIF4E1, leading to initiation of translation. Acts as a regulator of various biological processes, such as innate immunity, cell growth or synaptic transmission. Acts downstream of phosphoinositide-3-kinase (PI3K) to regulate cell growth. Extends lifespan upon dietary restriction by regulating the mitochondrial translation. Acts as a regulator of lifespan in response to cold by regulating the mitochondrial translation. Acts as a negative regulator of presynaptic release of neurotransmitter in motor neurons: Thor expression is induced in response to insulin signaling, leading to prevent of translation of complexin (cpx), a protein known to regulate the exocytosis of synaptic vesicles. Acts as a negative regulator of synaptic strength at the neuromuscular junction: Thor expression in response to acute fasting prevents translation, thereby suppressing retrograde synaptic enhancement. This chain is Eukaryotic translation initiation factor 4E-binding protein, found in Drosophila melanogaster (Fruit fly).